The sequence spans 303 residues: Proteasome subunit beta (303 aa).

The propeptide at 1–67 is removed in mature form; by autocatalysis; that stretch reads MTWQFPDRLS…SGGTGQLPHG (67 aa). Threonine 68 (nucleophile) is an active-site residue.

Belongs to the peptidase T1B family. In terms of assembly, the 20S proteasome core is composed of 14 alpha and 14 beta subunits that assemble into four stacked heptameric rings, resulting in a barrel-shaped structure. The two inner rings, each composed of seven catalytic beta subunits, are sandwiched by two outer rings, each composed of seven alpha subunits. The catalytic chamber with the active sites is on the inside of the barrel. Has a gated structure, the ends of the cylinder being occluded by the N-termini of the alpha-subunits. Is capped by the proteasome-associated ATPase, ARC.

The protein resides in the cytoplasm. The catalysed reaction is Cleavage of peptide bonds with very broad specificity.. The protein operates within protein degradation; proteasomal Pup-dependent pathway. With respect to regulation, the formation of the proteasomal ATPase ARC-20S proteasome complex, likely via the docking of the C-termini of ARC into the intersubunit pockets in the alpha-rings, may trigger opening of the gate for substrate entry. Interconversion between the open-gate and close-gate conformations leads to a dynamic regulation of the 20S proteasome proteolysis activity. Functionally, component of the proteasome core, a large protease complex with broad specificity involved in protein degradation. The polypeptide is Proteasome subunit beta (Mycolicibacterium paratuberculosis (strain ATCC BAA-968 / K-10) (Mycobacterium paratuberculosis)).